Here is a 245-residue protein sequence, read N- to C-terminus: tRNA pseudouridine synthase A (245 aa).

The Nucleophile role is filled by Asp-52. Tyr-111 serves as a coordination point for substrate.

It belongs to the tRNA pseudouridine synthase TruA family. Homodimer.

It carries out the reaction uridine(38/39/40) in tRNA = pseudouridine(38/39/40) in tRNA. Formation of pseudouridine at positions 38, 39 and 40 in the anticodon stem and loop of transfer RNAs. The chain is tRNA pseudouridine synthase A from Wolbachia sp. subsp. Drosophila simulans (strain wRi).